The chain runs to 247 residues: Sec-independent protein translocase protein TatC (247 aa).

A run of 5 helical transmembrane segments spans residues 21 to 41, 71 to 91, 109 to 129, 154 to 174, and 195 to 215; these read IILL…KPLI, AFII…WAFV, ITFL…FPFI, FLLQ…VIML, and FCLL…HLMI.

The protein belongs to the TatC family. As to quaternary structure, forms a complex with TatA.

It is found in the cell membrane. Functionally, part of the twin-arginine translocation (Tat) system that transports large folded proteins containing a characteristic twin-arginine motif in their signal peptide across membranes. In Listeria innocua serovar 6a (strain ATCC BAA-680 / CLIP 11262), this protein is Sec-independent protein translocase protein TatC.